Here is a 389-residue protein sequence, read N- to C-terminus: Putative glutamate--cysteine ligase 2 (389 aa).

It belongs to the glutamate--cysteine ligase type 2 family. YbdK subfamily.

It carries out the reaction L-cysteine + L-glutamate + ATP = gamma-L-glutamyl-L-cysteine + ADP + phosphate + H(+). Functionally, ATP-dependent carboxylate-amine ligase which exhibits weak glutamate--cysteine ligase activity. This is Putative glutamate--cysteine ligase 2 from Rhodospirillum rubrum (strain ATCC 11170 / ATH 1.1.1 / DSM 467 / LMG 4362 / NCIMB 8255 / S1).